A 467-amino-acid chain; its full sequence is Serine decarboxylase 2 (467 aa).

A substrate-binding site is contributed by His-178. N6-(pyridoxal phosphate)lysine is present on Lys-290.

Belongs to the group II decarboxylase family. The cofactor is pyridoxal 5'-phosphate.

The catalysed reaction is L-serine + H(+) = ethanolamine + CO2. In terms of biological role, catalyzes the biosynthesis of ethanolamine from serine. Decarboxylation of free serine is the major source of ethanolamine production in plants and ethanolamine metabolism is crucial for the synthesis of choline, phosphatidylethanolamine (PE) and phosphatidylcholine (PC), and thus for plant growth. This is Serine decarboxylase 2 from Oryza sativa subsp. japonica (Rice).